We begin with the raw amino-acid sequence, 277 residues long: Phosphoribosylaminoimidazole-succinocarboxamide synthase (277 aa).

It belongs to the SAICAR synthetase family.

It catalyses the reaction 5-amino-1-(5-phospho-D-ribosyl)imidazole-4-carboxylate + L-aspartate + ATP = (2S)-2-[5-amino-1-(5-phospho-beta-D-ribosyl)imidazole-4-carboxamido]succinate + ADP + phosphate + 2 H(+). It participates in purine metabolism; IMP biosynthesis via de novo pathway; 5-amino-1-(5-phospho-D-ribosyl)imidazole-4-carboxamide from 5-amino-1-(5-phospho-D-ribosyl)imidazole-4-carboxylate: step 1/2. This is Phosphoribosylaminoimidazole-succinocarboxamide synthase from Salinispora tropica (strain ATCC BAA-916 / DSM 44818 / JCM 13857 / NBRC 105044 / CNB-440).